Consider the following 397-residue polypeptide: Ribosomal RNA large subunit methyltransferase I (397 aa).

Positions 2-81 (STTVYLQKDR…EQIDTEFFVR (80 aa)) constitute a PUA domain.

It belongs to the methyltransferase superfamily. RlmI family.

Its subcellular location is the cytoplasm. It catalyses the reaction cytidine(1962) in 23S rRNA + S-adenosyl-L-methionine = 5-methylcytidine(1962) in 23S rRNA + S-adenosyl-L-homocysteine + H(+). In terms of biological role, specifically methylates the cytosine at position 1962 (m5C1962) of 23S rRNA. In Tolumonas auensis (strain DSM 9187 / NBRC 110442 / TA 4), this protein is Ribosomal RNA large subunit methyltransferase I.